The primary structure comprises 128 residues: CD59 glycoprotein (128 aa).

Positions 1-25 are cleaved as a signal peptide; that stretch reads MGIQGGSVLFGLLLVLAVFCHSGNS. One can recognise a UPAR/Ly6 domain in the interval 26-108; the sequence is LQCYSCPYPT…ALKNGGTTLS (83 aa). Cystine bridges form between C28–C51, C31–C38, C44–C64, C70–C88, and C89–C94. N43 carries N-linked (GlcNAc...) asparagine glycosylation. N102 is lipidated: GPI-anchor amidated asparagine. Positions 103 to 128 are cleaved as a propeptide — removed in mature form; that stretch reads GGTTLSKKTVLLLVIPFLVAAWSLHP.

In terms of assembly, interacts with T-cell surface antigen CD2. In terms of processing, N- and O-glycosylated.

The protein resides in the cell membrane. It is found in the secreted. Its function is as follows. Potent inhibitor of the complement membrane attack complex (MAC) action, which protects self-cells from damage during complement activation. Acts by binding to the beta-haipins of C8 (C8A and C8B) components of the assembling MAC, forming an intermolecular beta-sheet that prevents incorporation of the multiple copies of C9 required for complete formation of the osmolytic pore. The polypeptide is CD59 glycoprotein (Aotus trivirgatus (Three-striped night monkey)).